The following is a 609-amino-acid chain: DNA polymerase alpha subunit B (609 aa).

Ser155 carries the post-translational modification Phosphoserine. Thr164 is modified (phosphothreonine). 2 positions are modified to phosphoserine: Ser166 and Ser168.

The protein belongs to the DNA polymerase alpha subunit B family. Component of the alpha DNA polymerase complex (also known as the alpha DNA polymerase-primase complex) consisting of four subunits: the catalytic subunit PolA1, the regulatory subunit PolA2, and the primase complex subunits Prim1 and Prim2 respectively. PolA1 associates with the DNA primase complex before association with PolA2. Phosphorylated in embryos until cycle 13. In terms of tissue distribution, expressed in embryos (at protein level).

The protein localises to the nucleus. Its function is as follows. Accessory subunit of the DNA polymerase alpha complex (also known as the alpha DNA polymerase-primase complex) which plays an essential role in the initiation of DNA synthesis. During the S phase of the cell cycle, the DNA polymerase alpha complex (composed of a catalytic subunit PolA1, an accessory subunit PolA2 and two primase subunits, the catalytic subunit Prim1 and the regulatory subunit Prim2) is recruited to DNA at the replicative forks. The primase subunit of the polymerase alpha complex initiates DNA synthesis by oligomerising short RNA primers on both leading and lagging strands. These primers are initially extended by the polymerase alpha catalytic subunit and subsequently transferred to polymerase delta and polymerase epsilon for processive synthesis on the lagging and leading strand, respectively. This is DNA polymerase alpha subunit B from Drosophila melanogaster (Fruit fly).